A 90-amino-acid polypeptide reads, in one-letter code: MAVKIRLKRMGSKKKPFYRIVVADSRFPRDGRSIETIGTYNPLLDPVEVKIDEEATLKWMHNGAKPSDTVRNLLSREGIMEKFHNQKLGK.

It belongs to the bacterial ribosomal protein bS16 family.

This Listeria innocua serovar 6a (strain ATCC BAA-680 / CLIP 11262) protein is Small ribosomal subunit protein bS16.